The chain runs to 84 residues: Cell division topological specificity factor (84 aa).

This sequence belongs to the MinE family.

Its function is as follows. Prevents the cell division inhibition by proteins MinC and MinD at internal division sites while permitting inhibition at polar sites. This ensures cell division at the proper site by restricting the formation of a division septum at the midpoint of the long axis of the cell. The chain is Cell division topological specificity factor from Pseudomonas putida (strain ATCC 700007 / DSM 6899 / JCM 31910 / BCRC 17059 / LMG 24140 / F1).